The following is a 337-amino-acid chain: tRNA N6-adenosine threonylcarbamoyltransferase (337 aa).

Fe cation contacts are provided by histidine 111 and histidine 115. Residues 134–138, aspartate 167, glycine 180, and asparagine 272 contribute to the substrate site; that span reads LVSGG. Aspartate 300 serves as a coordination point for Fe cation.

It belongs to the KAE1 / TsaD family. The cofactor is Fe(2+).

Its subcellular location is the cytoplasm. The enzyme catalyses L-threonylcarbamoyladenylate + adenosine(37) in tRNA = N(6)-L-threonylcarbamoyladenosine(37) in tRNA + AMP + H(+). Functionally, required for the formation of a threonylcarbamoyl group on adenosine at position 37 (t(6)A37) in tRNAs that read codons beginning with adenine. Is involved in the transfer of the threonylcarbamoyl moiety of threonylcarbamoyl-AMP (TC-AMP) to the N6 group of A37, together with TsaE and TsaB. TsaD likely plays a direct catalytic role in this reaction. The polypeptide is tRNA N6-adenosine threonylcarbamoyltransferase (Yersinia enterocolitica serotype O:8 / biotype 1B (strain NCTC 13174 / 8081)).